The primary structure comprises 43 residues: Probable intron-encoded DNA endonuclease 2 (43 aa).

The protein belongs to the LAGLIDADG endonuclease family.

Its subcellular location is the mitochondrion. Mitochondrial DNA endonuclease involved in intron homing. The polypeptide is Probable intron-encoded DNA endonuclease 2 (hegI2) (Mycosarcoma maydis (Corn smut fungus)).